The chain runs to 136 residues: Large ribosomal subunit protein uL16 (136 aa).

It belongs to the universal ribosomal protein uL16 family. In terms of assembly, part of the 50S ribosomal subunit.

Binds 23S rRNA and is also seen to make contacts with the A and possibly P site tRNAs. In Haemophilus ducreyi (strain 35000HP / ATCC 700724), this protein is Large ribosomal subunit protein uL16.